The sequence spans 370 residues: Neutral protease 2 homolog AFUB_070680 (370 aa).

A signal peptide spans 1 to 19; that stretch reads MKVTILASAILALINGALA. A propeptide spanning residues 20-172 is cleaved from the precursor; sequence LPANTPTLDV…PQAIKLLDRR (153 aa). 2 disulfide bridges follow: Cys178–Cys250 and Cys257–Cys275. His300 is a Zn(2+) binding site. Glu301 is a catalytic residue. 2 residues coordinate Zn(2+): His304 and Asp315.

Belongs to the peptidase M35 family. Requires Zn(2+) as cofactor.

It localises to the secreted. The catalysed reaction is Preferential cleavage of bonds with hydrophobic residues in P1'. Also 3-Asn-|-Gln-4 and 8-Gly-|-Ser-9 bonds in insulin B chain.. Functionally, secreted metalloproteinase that allows assimilation of proteinaceous substrates. Shows high activities on basic nuclear substrates such as histone and protamine. May be involved in virulence. This Aspergillus fumigatus (strain CBS 144.89 / FGSC A1163 / CEA10) (Neosartorya fumigata) protein is Neutral protease 2 homolog AFUB_070680.